The following is a 516-amino-acid chain: Probable cyclic di-GMP phosphodiesterase PdeB (516 aa).

The next 2 helical transmembrane spans lie at 6–26 and 242–262; these read LVGLISGVLILSVLLPVGLSI and QVFIWLPLGLVIGLLAAMFVL. An EAL domain is found at 268–516; it reads IQSPHHRLQD…DFLRWAEQHL (249 aa).

Its subcellular location is the cell inner membrane. It catalyses the reaction 3',3'-c-di-GMP + H2O = 5'-phosphoguanylyl(3'-&gt;5')guanosine + H(+). In terms of biological role, phosphodiesterase (PDE) that catalyzes the hydrolysis of cyclic-di-GMP (c-di-GMP) to 5'-pGpG. This Escherichia coli (strain K12) protein is Probable cyclic di-GMP phosphodiesterase PdeB.